We begin with the raw amino-acid sequence, 293 residues long: Acetylglutamate kinase (293 aa).

Substrate contacts are provided by residues 68-69 (GG), Arg90, and Asn189.

It belongs to the acetylglutamate kinase family. ArgB subfamily.

It localises to the cytoplasm. The catalysed reaction is N-acetyl-L-glutamate + ATP = N-acetyl-L-glutamyl 5-phosphate + ADP. The protein operates within amino-acid biosynthesis; L-arginine biosynthesis; N(2)-acetyl-L-ornithine from L-glutamate: step 2/4. Catalyzes the ATP-dependent phosphorylation of N-acetyl-L-glutamate. The protein is Acetylglutamate kinase of Mycobacterium ulcerans (strain Agy99).